The sequence spans 179 residues: ATP synthase subunit delta (179 aa).

The protein belongs to the ATPase delta chain family. In terms of assembly, F-type ATPases have 2 components, F(1) - the catalytic core - and F(0) - the membrane proton channel. F(1) has five subunits: alpha(3), beta(3), gamma(1), delta(1), epsilon(1). F(0) has three main subunits: a(1), b(2) and c(10-14). The alpha and beta chains form an alternating ring which encloses part of the gamma chain. F(1) is attached to F(0) by a central stalk formed by the gamma and epsilon chains, while a peripheral stalk is formed by the delta and b chains.

It localises to the cell membrane. Functionally, f(1)F(0) ATP synthase produces ATP from ADP in the presence of a proton or sodium gradient. F-type ATPases consist of two structural domains, F(1) containing the extramembraneous catalytic core and F(0) containing the membrane proton channel, linked together by a central stalk and a peripheral stalk. During catalysis, ATP synthesis in the catalytic domain of F(1) is coupled via a rotary mechanism of the central stalk subunits to proton translocation. Its function is as follows. This protein is part of the stalk that links CF(0) to CF(1). It either transmits conformational changes from CF(0) to CF(1) or is implicated in proton conduction. In Listeria monocytogenes serovar 1/2a (strain ATCC BAA-679 / EGD-e), this protein is ATP synthase subunit delta.